The following is a 309-amino-acid chain: Olfactory receptor 8B4 (309 aa).

The Extracellular portion of the chain corresponds to Met-1–Leu-25. N-linked (GlcNAc...) asparagine glycosylation occurs at Asn-5. The chain crosses the membrane as a helical span at residues Pro-26–Ile-46. Over Thr-47–Ser-54 the chain is Cytoplasmic. The chain crosses the membrane as a helical span at residues Leu-55 to Cys-75. The Extracellular portion of the chain corresponds to Val-76 to Thr-98. Cys-96 and Cys-188 form a disulfide bridge. A helical membrane pass occupies residues Gln-99 to Tyr-119. The Cytoplasmic portion of the chain corresponds to Asp-120–Arg-138. The chain crosses the membrane as a helical span at residues Val-139–Thr-159. At Gly-160–Leu-196 the chain is on the extracellular side. The chain crosses the membrane as a helical span at residues Val-197 to Ser-216. Residues Tyr-217–Ala-236 lie on the Cytoplasmic side of the membrane. Residues Phe-237–Thr-257 traverse the membrane as a helical segment. The Extracellular portion of the chain corresponds to Tyr-258 to Gly-270. Residues Arg-271 to Leu-291 traverse the membrane as a helical segment. At Arg-292 to Phe-309 the chain is on the cytoplasmic side.

This sequence belongs to the G-protein coupled receptor 1 family.

The protein resides in the cell membrane. Functionally, odorant receptor. This chain is Olfactory receptor 8B4 (OR8B4), found in Homo sapiens (Human).